The chain runs to 1774 residues: Receptor-mediated endocytosis protein 6 homolog (1774 aa).

Residues 157–396 (ELLLKLLREL…EDVVAILPQQ (240 aa)) form the Ras-GAP domain. Disordered regions lie at residues 444–480 (IPKQ…NNRS), 517–564 (PLAN…PAPT), 661–727 (AAHS…HHHG), 784–811 (ENTL…RNFS), 869–947 (AEID…EDSA), 983–1102 (ESSF…EEQP), 1115–1142 (QEEQ…SMEQ), and 1214–1342 (RAGA…GGRS). 2 stretches are compositionally biased toward low complexity: residues 519–533 (ANGQ…SASN) and 540–557 (SSHS…AAPA). Residues 674-683 (QQERDVHENE) are compositionally biased toward basic and acidic residues. Residues 688–713 (DMVSANVSGRGTPNISGRDTPSSQVT) show a composition bias toward polar residues. Basic and acidic residues predominate over residues 794–809 (RGGDRGDRGDRDRDRN). A compositionally biased stretch (gly residues) spans 887 to 905 (PGSGGGAGVPEAGGGGGVV). The segment covering 929–944 (DPDRERLRNGSERSQE) has biased composition (basic and acidic residues). Residues 1011 to 1027 (MRRQTSAESSISNQSLN) show a composition bias toward polar residues. Positions 1038–1047 (LAKHHHHHQH) are enriched in basic residues. Positions 1048–1060 (RDRDRDRDRDRDH) are enriched in basic and acidic residues. Over residues 1061–1076 (REHHHKSAALKKKKHQ) the composition is skewed to basic residues. Positions 1077 to 1087 (EHKEHQHRDLI) are enriched in basic and acidic residues. The segment covering 1091-1101 (DCSEDKDEEEQ) has biased composition (acidic residues). Over residues 1115–1125 (QEEQQQQQQQQ) the composition is skewed to low complexity. Over residues 1246–1291 (SADKEQQPYRDRERERDRERDRERDRDRERDRDRDRDRDRDREHHS) the composition is skewed to basic and acidic residues. Residues 1310-1335 (SSSSKNNAIAIAAPSSINPNPSPSSA) are compositionally biased toward low complexity. Residues 1516 to 1546 (RHRQQLLLRSEQLEQLEVRLRSEARSCQRCL) adopt a coiled-coil conformation. The 140-residue stretch at 1635–1774 (VSRDTVLSAH…KFIKTMDYLD (140 aa)) folds into the VPS9 domain.

Belongs to the GAPVD1 family.

The protein localises to the membrane. Its function is as follows. Acts both as a GTPase-activating protein (GAP) and a guanine nucleotide exchange factor (GEF), and participates in endocytosis. This is Receptor-mediated endocytosis protein 6 homolog from Drosophila pseudoobscura pseudoobscura (Fruit fly).